Reading from the N-terminus, the 352-residue chain is Fc receptor-like A (352 aa).

An N-terminal signal peptide occupies residues Met-1–Ser-30. The disordered stretch occupies residues Cys-46–Ser-65. Residues Ala-50–Asp-61 are compositionally biased toward acidic residues. 2 consecutive Ig-like C2-type domains span residues Pro-80 to Ser-169 and Pro-182 to Ser-260. 2 cysteine pairs are disulfide-bonded: Cys-109–Cys-153 and Cys-202–Cys-250. Residues Lys-275–Leu-310 are disordered.

Monomer or homodimer; disulfide-linked. As to expression, highly expressed in spleen. Expressed in immature B-cell and B-cell lines.

It localises to the cytoplasm. Functionally, may be implicated in B-cell differentiation and lymphomagenesis. This chain is Fc receptor-like A (Fcrla), found in Mus musculus (Mouse).